The primary structure comprises 87 residues: Exodeoxyribonuclease 7 small subunit (87 aa).

The protein belongs to the XseB family. Heterooligomer composed of large and small subunits.

It is found in the cytoplasm. The catalysed reaction is Exonucleolytic cleavage in either 5'- to 3'- or 3'- to 5'-direction to yield nucleoside 5'-phosphates.. In terms of biological role, bidirectionally degrades single-stranded DNA into large acid-insoluble oligonucleotides, which are then degraded further into small acid-soluble oligonucleotides. In Pelotomaculum thermopropionicum (strain DSM 13744 / JCM 10971 / SI), this protein is Exodeoxyribonuclease 7 small subunit.